We begin with the raw amino-acid sequence, 152 residues long: MGVVFAFGFYLIFIKLTGLKLMDYFPRFKENRLKMIFSILSVILAFLINWLIMKNFSFLIEIIHPIASVWIFIILIYLLLRFLFLKRVPLSNYEKKFMGNMSAIAIFLELLKIIEYVDEHNIASPITVALVFFIPVVVFFNCKYFYEMELSS.

Helical transmembrane passes span 2-22, 33-53, 58-78, 97-117, and 122-142; these read GVVFAFGFYLIFIKLTGLKLM, LKMIFSILSVILAFLINWLIM, FLIEIIHPIASVWIFIILIYL, FMGNMSAIAIFLELLKIIEYV, and IASPITVALVFFIPVVVFFNC.

The protein resides in the cell membrane. This is an uncharacterized protein from Methanocaldococcus jannaschii (strain ATCC 43067 / DSM 2661 / JAL-1 / JCM 10045 / NBRC 100440) (Methanococcus jannaschii).